The sequence spans 179 residues: Embryo-specific protein ATS3A (179 aa).

The N-terminal stretch at 1-22 (MLRLAIPLFLFALCSFTLFSSA) is a signal peptide. The 111-residue stretch at 48–158 (CSYTVIIKTS…NSVWYGFNVC (111 aa)) folds into the PLAT domain.

In terms of assembly, interacts with EULS3 (via N-terminus). As to expression, expressed in roots, rosette leaves, stems, cauline leaves and flowers.

It localises to the secreted. In terms of biological role, may play a role during embryo development. The protein is Embryo-specific protein ATS3A of Arabidopsis thaliana (Mouse-ear cress).